Consider the following 313-residue polypeptide: Olfactory receptor 56A4 (313 aa).

Over 1–28 (MASPSNDSTAPVSEFLLICFPNFQSWQH) the chain is Extracellular. An N-linked (GlcNAc...) asparagine glycan is attached at asparagine 6. Residues 29–49 (WLSLPLSLLFLLAMGANTTLL) form a helical membrane-spanning segment. Topologically, residues 50-57 (ITIQLEAS) are cytoplasmic. A helical transmembrane segment spans residues 58–78 (LHQPLYYLLSLLSLLDIVLCL). The Extracellular portion of the chain corresponds to 79-102 (TVIPKVLAIFWFDLRSISFPACFL). Cysteine 100 and cysteine 192 are oxidised to a cystine. Residues 103–123 (QMFIMNSFLTMESCTFMVMAY) traverse the membrane as a helical segment. Residues 124-142 (DRYVAICHPLRYPSIITDQ) lie on the Cytoplasmic side of the membrane. The helical transmembrane segment at 143-163 (FVARAVVFVIARNAFVSLPVP) threads the bilayer. Over 164 to 199 (MLSARLRYCAGNIIKNCICSNLSVSKLSCDDITFNQ) the chain is Extracellular. The N-linked (GlcNAc...) asparagine glycan is linked to asparagine 184. A helical membrane pass occupies residues 200 to 220 (LYQFVAGWTLLGSDLILIVIS). The Cytoplasmic portion of the chain corresponds to 221 to 240 (YSFILKVVLRIKAEGAVAKA). The chain crosses the membrane as a helical span at residues 241-261 (LSTCGSHFILILFFSTVLLVL). At 262-276 (VITNLARKRIPPDVP) the chain is on the extracellular side. The chain crosses the membrane as a helical span at residues 277-297 (ILLNILHHLIPPALNPIVYGV). Topologically, residues 298–313 (RTKEIKQGIQNLLKRL) are cytoplasmic.

This sequence belongs to the G-protein coupled receptor 1 family.

It localises to the cell membrane. Functionally, odorant receptor. The sequence is that of Olfactory receptor 56A4 (OR56A4) from Homo sapiens (Human).